The primary structure comprises 138 residues: Small ribosomal subunit protein uS11 (138 aa).

Polar residues predominate over residues 1–12 (MAKQSAKGSTTT). The tract at residues 1–37 (MAKQSAKGSTTTKRQRGKRREKKNVPRGQAHIQSTFN) is disordered. Residues 13-22 (KRQRGKRREK) show a composition bias toward basic residues.

The protein belongs to the universal ribosomal protein uS11 family. Part of the 30S ribosomal subunit. Interacts with proteins S7 and S18. Binds to IF-3.

Located on the platform of the 30S subunit, it bridges several disparate RNA helices of the 16S rRNA. Forms part of the Shine-Dalgarno cleft in the 70S ribosome. The sequence is that of Small ribosomal subunit protein uS11 from Roseiflexus castenholzii (strain DSM 13941 / HLO8).